The sequence spans 492 residues: Glutamyl-tRNA(Gln) amidotransferase subunit A (492 aa).

Catalysis depends on charge relay system residues K81 and S156. The active-site Acyl-ester intermediate is the S180.

Belongs to the amidase family. GatA subfamily. In terms of assembly, heterotrimer of A, B and C subunits.

It catalyses the reaction L-glutamyl-tRNA(Gln) + L-glutamine + ATP + H2O = L-glutaminyl-tRNA(Gln) + L-glutamate + ADP + phosphate + H(+). Allows the formation of correctly charged Gln-tRNA(Gln) through the transamidation of misacylated Glu-tRNA(Gln) in organisms which lack glutaminyl-tRNA synthetase. The reaction takes place in the presence of glutamine and ATP through an activated gamma-phospho-Glu-tRNA(Gln). This chain is Glutamyl-tRNA(Gln) amidotransferase subunit A, found in Rhodococcus erythropolis (strain PR4 / NBRC 100887).